The sequence spans 417 residues: Serine hydroxymethyltransferase (417 aa).

(6S)-5,6,7,8-tetrahydrofolate contacts are provided by residues leucine 121 and 125 to 127; that span reads GHL. N6-(pyridoxal phosphate)lysine is present on lysine 229. Residue 355 to 357 participates in (6S)-5,6,7,8-tetrahydrofolate binding; sequence SPF.

The protein belongs to the SHMT family. Homodimer. Pyridoxal 5'-phosphate is required as a cofactor.

It is found in the cytoplasm. It catalyses the reaction (6R)-5,10-methylene-5,6,7,8-tetrahydrofolate + glycine + H2O = (6S)-5,6,7,8-tetrahydrofolate + L-serine. Its pathway is one-carbon metabolism; tetrahydrofolate interconversion. The protein operates within amino-acid biosynthesis; glycine biosynthesis; glycine from L-serine: step 1/1. In terms of biological role, catalyzes the reversible interconversion of serine and glycine with tetrahydrofolate (THF) serving as the one-carbon carrier. This reaction serves as the major source of one-carbon groups required for the biosynthesis of purines, thymidylate, methionine, and other important biomolecules. Also exhibits THF-independent aldolase activity toward beta-hydroxyamino acids, producing glycine and aldehydes, via a retro-aldol mechanism. In Xanthomonas campestris pv. campestris (strain 8004), this protein is Serine hydroxymethyltransferase.